Reading from the N-terminus, the 173-residue chain is MLPPPPRQPPPQARAARGAVRLQRPFLRSPLGVLRLLQLLAGAAFWITIATSKYQGPVHFALFVSVLFWLLTLGLYFLTLLGKHELVPVLGSRWLMVNVAHDVLAAALYGAATGIMSDQMQRHSYCNLKDYPLPCAYHAFLAAAVCGGVCHGLYLLSALYGCGRRCQGKQEVA.

Met1 is subject to N-acetylmethionine. At 1–29 (MLPPPPRQPPPQARAARGAVRLQRPFLRS) the chain is on the cytoplasmic side. One can recognise an MARVEL domain in the interval 26–166 (FLRSPLGVLR…SALYGCGRRC (141 aa)). A helical membrane pass occupies residues 30–50 (PLGVLRLLQLLAGAAFWITIA). Residues 51 to 59 (TSKYQGPVH) are Extracellular-facing. A helical membrane pass occupies residues 60-80 (FALFVSVLFWLLTLGLYFLTL). The Cytoplasmic portion of the chain corresponds to 81–94 (LGKHELVPVLGSRW). The chain crosses the membrane as a helical span at residues 95 to 115 (LMVNVAHDVLAAALYGAATGI). Residues 116-138 (MSDQMQRHSYCNLKDYPLPCAYH) lie on the Extracellular side of the membrane. The chain crosses the membrane as a helical span at residues 139 to 159 (AFLAAAVCGGVCHGLYLLSAL). At 160–173 (YGCGRRCQGKQEVA) the chain is on the cytoplasmic side.

In terms of tissue distribution, widely expressed in normal tissues. Down-regulated in multiple primary tumors.

It localises to the cell membrane. The protein resides in the cytoplasm. The protein localises to the cytoskeleton. It is found in the nucleus. Functionally, microtubule-associated protein that exhibits cell cycle-dependent localization and can inhibit cell proliferation and migration. The protein is MARVEL domain-containing protein 1 (MARVELD1) of Homo sapiens (Human).